Consider the following 76-residue polypeptide: Omega-conotoxin-like TeAr94 (76 aa).

The signal sequence occupies residues 1-22 (MKLTCMMIVAVLFLTAWTFVTA). Residues 23-50 (VPHSSNALENLYLKAHHEMNNPEDSELN) constitute a propeptide that is removed on maturation. 3 disulfides stabilise this stretch: C53-C67, C60-C71, and C66-C75.

It belongs to the conotoxin O1 superfamily. In terms of tissue distribution, expressed by the venom duct.

Its subcellular location is the secreted. Omega-conotoxins act at presynaptic membranes, they bind and block voltage-gated calcium channels. This is Omega-conotoxin-like TeAr94 from Conus textile (Cloth-of-gold cone).